Consider the following 586-residue polypeptide: Heterogeneous nuclear ribonucleoprotein L (586 aa).

Positions M1–L16 are enriched in basic residues. Residues M1 to A97 are disordered. The segment covering E17 to R27 has biased composition (basic and acidic residues). A compositionally biased stretch (low complexity) spans R28–A37. Positions A38 to G54 are enriched in gly residues. Glycyl lysine isopeptide (Lys-Gly) (interchain with G-Cter in SUMO2) cross-links involve residues K59 and K62. Residues Q69–E87 are compositionally biased toward gly residues. S98 is modified (phosphoserine). The RRM 1 domain maps to P99 to S173. K133 participates in a covalent cross-link: Glycyl lysine isopeptide (Lys-Gly) (interchain with G-Cter in SUMO2). S182 bears the Phosphoserine mark. The 78-residue stretch at S190–P267 folds into the RRM 2 domain. The residue at position 266 (K266) is an N6-acetyllysine. The segment covering D281–N298 has biased composition (polar residues). Positions D281–A376 are disordered. Phosphoserine is present on residues S288 and S295. K299 is covalently cross-linked (Glycyl lysine isopeptide (Lys-Gly) (interchain with G-Cter in SUMO2)). An asymmetric dimethylarginine mark is found at R351 and R355. The segment covering G361 to Y372 has biased composition (pro residues). Residue S378 is modified to Phosphoserine. RRM domains are found at residues P379–E476 and R492–S580. S541 carries the phosphoserine; by CaMK4 modification. K565 participates in a covalent cross-link: Glycyl lysine isopeptide (Lys-Gly) (interchain with G-Cter in SUMO2).

As to quaternary structure, identified in a IGF2BP1-dependent mRNP granule complex containing untranslated mRNAs. Interacts with HNRNPLL. Interacts with APEX1; the interaction is DNA-dependent. Component of a complex with SETD2. Interacts with ELAVL1. Part of a transcription inhibitory ribonucleoprotein complex composed at least of the circular RNA circZNF827, ZNF827 and HNRNPK. Interacts with CHD8 in an RNA-dependent manner. Phosphorylation at Ser-541 by CaMK4 enhances interaction with a CaMK4-responsive RNA element (CaRRE1), and prevents inclusion of the stress axis-regulated exon (STREX) of the KCNMA1 potassium channel transcripts upon membrane depolarization. In terms of tissue distribution, detected in hematopoietic cells, including lymphoid progenitor cells.

The protein resides in the nucleus. It localises to the nucleoplasm. Its subcellular location is the cytoplasm. Functionally, splicing factor binding to exonic or intronic sites and acting as either an activator or repressor of exon inclusion. Exhibits a binding preference for CA-rich elements. Component of the heterogeneous nuclear ribonucleoprotein (hnRNP) complexes and associated with most nascent transcripts. Associates, together with APEX1, to the negative calcium responsive element (nCaRE) B2 of the APEX2 promoter. As part of a ribonucleoprotein complex composed at least of ZNF827, HNRNPK and the circular RNA circZNF827 that nucleates the complex on chromatin, may negatively regulate the transcription of genes involved in neuronal differentiation. Regulates alternative splicing of a core group of genes involved in neuronal differentiation, likely by mediating H3K36me3-coupled transcription elongation and co-transcriptional RNA processing via interaction with CHD8. This Mus musculus (Mouse) protein is Heterogeneous nuclear ribonucleoprotein L (Hnrnpl).